Reading from the N-terminus, the 320-residue chain is Ferrochelatase (320 aa).

2 residues coordinate Fe cation: His-194 and Glu-275.

This sequence belongs to the ferrochelatase family. Monomer.

The protein localises to the cytoplasm. It carries out the reaction heme b + 2 H(+) = protoporphyrin IX + Fe(2+). The protein operates within porphyrin-containing compound metabolism; protoheme biosynthesis; protoheme from protoporphyrin-IX: step 1/1. Its function is as follows. Catalyzes the ferrous insertion into protoporphyrin IX. This Shigella flexneri serotype 5b (strain 8401) protein is Ferrochelatase.